The primary structure comprises 294 residues: Syntaxin-19 (294 aa).

The t-SNARE coiled-coil homology domain maps to 209–271 (LSEIEQRHKE…NNTKEKFGLA (63 aa)).

Belongs to the syntaxin family. As to quaternary structure, interacts with EGFR.

Its subcellular location is the cell membrane. The protein resides in the cytoplasm. Functionally, plays a role in endosomal trafficking of the epidermal growth factor receptor (EGFR). The chain is Syntaxin-19 (STX19) from Homo sapiens (Human).